The primary structure comprises 233 residues: Purine nucleoside phosphorylase DeoD-type (233 aa).

An a purine D-ribonucleoside-binding site is contributed by H4. Residues G20, R24, R43, and 87 to 90 each bind phosphate; that span reads RIGT. A purine D-ribonucleoside is bound by residues 179 to 181 and 203 to 204; these read EME and SD. The active-site Proton donor is the D204.

Belongs to the PNP/UDP phosphorylase family. Homohexamer; trimer of homodimers.

The catalysed reaction is a purine D-ribonucleoside + phosphate = a purine nucleobase + alpha-D-ribose 1-phosphate. It carries out the reaction a purine 2'-deoxy-D-ribonucleoside + phosphate = a purine nucleobase + 2-deoxy-alpha-D-ribose 1-phosphate. Its function is as follows. Catalyzes the reversible phosphorolytic breakdown of the N-glycosidic bond in the beta-(deoxy)ribonucleoside molecules, with the formation of the corresponding free purine bases and pentose-1-phosphate. The polypeptide is Purine nucleoside phosphorylase DeoD-type (Helicobacter acinonychis (strain Sheeba)).